We begin with the raw amino-acid sequence, 543 residues long: Heparanase-like protein 1 (543 aa).

An N-terminal signal peptide occupies residues 1 to 24; it reads MGFRVCVIVVFLGCLLLVPEKTMA. Asn184 carries N-linked (GlcNAc...) asparagine glycosylation. The active-site Proton donor is Glu201. A glycan (N-linked (GlcNAc...) asparagine) is linked at Asn304. Residue Glu320 is the Nucleophile of the active site. Residues Asn425 and Asn428 are each glycosylated (N-linked (GlcNAc...) asparagine).

This sequence belongs to the glycosyl hydrolase 79 family.

The protein resides in the lysosome membrane. The protein localises to the secreted. Functionally, endoglycosidase which is a cell surface and extracellular matrix-degrading enzyme. Cleaves heparan sulfate proteoglycans (HSPGs) into heparan sulfate side chains and core proteoglycans. The protein is Heparanase-like protein 1 of Arabidopsis thaliana (Mouse-ear cress).